Reading from the N-terminus, the 297-residue chain is MTRSLGGAELATSIRNDASVAAAALNDLGTRPKLAVVQATDDESTAWYVRSIASAAKRTGILCDIVDLGAAASTEQIRSTLVELGHDPDVHGIILQTPLPDGTDLDALREAINPAKDVDGANPVSLGRLVARLPAFAPATAQAVIALLDHHGISPHARTATVVGRSTVVGSPVAHLLVQRNATVTVCHRHTTDLAAGTRDADILVVAVGIPGLITADHVADGAVVIDVGTTATADGQLLGDVDAAAVDGRAGALTPVPGGVGPVTTALLLNHTVDAAGTQYAQTRSESVLAGFRSSV.

NADP(+) is bound by residues 164–166 (GRS) and Thr-230.

Belongs to the tetrahydrofolate dehydrogenase/cyclohydrolase family. In terms of assembly, homodimer.

It catalyses the reaction (6R)-5,10-methylene-5,6,7,8-tetrahydrofolate + NADP(+) = (6R)-5,10-methenyltetrahydrofolate + NADPH. The enzyme catalyses (6R)-5,10-methenyltetrahydrofolate + H2O = (6R)-10-formyltetrahydrofolate + H(+). The protein operates within one-carbon metabolism; tetrahydrofolate interconversion. Functionally, catalyzes the oxidation of 5,10-methylenetetrahydrofolate to 5,10-methenyltetrahydrofolate and then the hydrolysis of 5,10-methenyltetrahydrofolate to 10-formyltetrahydrofolate. The protein is Bifunctional protein FolD 1 of Rhodococcus jostii (strain RHA1).